The sequence spans 814 residues: Ubiquitin carboxyl-terminal hydrolase 45 (814 aa).

Over residues 1 to 14 the composition is skewed to basic and acidic residues; it reads MRVKDPTKALPEKA. Positions 1 to 28 are disordered; the sequence is MRVKDPTKALPEKAKRSKRPTVPHDEDS. Residues 1–62 are interaction with ERCC1; sequence MRVKDPTKAL…AIAENLWSVC (62 aa). Phosphoserine occurs at positions 28 and 29. The UBP-type zinc finger occupies 36–153; that stretch reads LTCQHVSHAI…AQIVDFLQKH (118 aa). Zn(2+) is bound by residues Cys38, His40, Cys62, Cys65, Cys85, Cys88, Cys93, His101, His105, His114, Cys127, and Cys130. Positions 190–813 constitute a USP domain; the sequence is RGITNLGNTC…QAYLLFYERV (624 aa). The active-site Nucleophile is Cys199. Disordered stretches follow at residues 418–443 and 479–533; these read IENI…IHDR and ESRL…PDGP. The span at 432–443 shows a compositional bias: basic and acidic residues; sequence SSKDKSQLIHDR. 2 positions are modified to phosphoserine: Ser508 and Ser526. Over residues 515–527 the composition is skewed to polar residues; it reads KQTGLFRSSSGSG. The active-site Proton acceptor is the His746.

It belongs to the peptidase C19 family. In terms of assembly, interacts with ERCC1. The catalytically active form interacts with SPDL1. In terms of tissue distribution, widely expressed. High expression is detected in the cerebellum. In the eye, it is expressed at high levels in the optic nerve, sclera and retina, with relatively low levels in the choroid, lens and retinal pigment epithelium.

It is found in the photoreceptor inner segment. It localises to the cytoplasm. The protein resides in the nucleus. The catalysed reaction is Thiol-dependent hydrolysis of ester, thioester, amide, peptide and isopeptide bonds formed by the C-terminal Gly of ubiquitin (a 76-residue protein attached to proteins as an intracellular targeting signal).. Its function is as follows. Catalyzes the deubiquitination of SPDL1. Plays a role in the repair of UV-induced DNA damage via deubiquitination of ERCC1, promoting its recruitment to DNA damage sites. May be involved in the maintenance of photoreceptor function. May play a role in normal retinal development. Plays a role in cell migration. The chain is Ubiquitin carboxyl-terminal hydrolase 45 (USP45) from Homo sapiens (Human).